Reading from the N-terminus, the 227-residue chain is 2,3-bisphosphoglycerate-dependent phosphoglycerate mutase (227 aa).

Substrate contacts are provided by residues 7–14 (RHGFSEWN), 20–21 (TG), Arg59, 86–89 (ERHY), Lys97, 113–114 (RR), and 182–183 (GN). His8 serves as the catalytic Tele-phosphohistidine intermediate. Glu86 (proton donor/acceptor) is an active-site residue.

The protein belongs to the phosphoglycerate mutase family. BPG-dependent PGAM subfamily. In terms of assembly, homodimer.

The catalysed reaction is (2R)-2-phosphoglycerate = (2R)-3-phosphoglycerate. It participates in carbohydrate degradation; glycolysis; pyruvate from D-glyceraldehyde 3-phosphate: step 3/5. Catalyzes the interconversion of 2-phosphoglycerate and 3-phosphoglycerate. The chain is 2,3-bisphosphoglycerate-dependent phosphoglycerate mutase from Actinobacillus pleuropneumoniae serotype 5b (strain L20).